A 1376-amino-acid polypeptide reads, in one-letter code: Protein FAM135B (1376 aa).

A compositionally biased stretch (acidic residues) spans 431–442; that stretch reads NEDECEFSEESP. A disordered region spans residues 431–489; the sequence is NEDECEFSEESPSENTHVGSKPHSIQSTTVHENASFEKPNVGTKAQEDCSTEGPEQGFD. The span at 443–462 shows a compositional bias: polar residues; it reads SENTHVGSKPHSIQSTTVHE.

The protein belongs to the FAM135 family.

The polypeptide is Protein FAM135B (fam135b) (Xenopus laevis (African clawed frog)).